The sequence spans 515 residues: Probable NADPH:adrenodoxin oxidoreductase, mitochondrial (515 aa).

Residues Ala52, Glu73, Leu81, and Ile119 each contribute to the FAD site. NADP(+) is bound by residues 191 to 194 (QGNV), 236 to 237 (RR), and Glu248. FAD-binding positions include Trp419 and 426–428 (GSI). Gly426 contacts NADP(+).

It belongs to the ferredoxin--NADP reductase type 1 family. FAD is required as a cofactor.

The protein localises to the mitochondrion inner membrane. It catalyses the reaction 2 reduced [adrenodoxin] + NADP(+) + H(+) = 2 oxidized [adrenodoxin] + NADPH. This is Probable NADPH:adrenodoxin oxidoreductase, mitochondrial (fdxr) from Dictyostelium discoideum (Social amoeba).